We begin with the raw amino-acid sequence, 889 residues long: DNA-directed RNA polymerase subunit Rpo1N (889 aa).

The Zn(2+) site is built by Cys62, Cys65, Cys72, His75, Cys102, Cys105, Cys149, and Cys152. Mg(2+) contacts are provided by Asp466, Asp468, and Asp470.

Belongs to the RNA polymerase beta' chain family. In terms of assembly, part of the RNA polymerase complex. Mg(2+) is required as a cofactor. The cofactor is Zn(2+).

The protein resides in the cytoplasm. It catalyses the reaction RNA(n) + a ribonucleoside 5'-triphosphate = RNA(n+1) + diphosphate. Functionally, DNA-dependent RNA polymerase (RNAP) catalyzes the transcription of DNA into RNA using the four ribonucleoside triphosphates as substrates. Forms the clamp head domain. This Methanococcus vannielii (strain ATCC 35089 / DSM 1224 / JCM 13029 / OCM 148 / SB) protein is DNA-directed RNA polymerase subunit Rpo1N.